The chain runs to 59 residues: Photosystem II reaction center protein K (59 aa).

Residues 1–22 (MILYSHLSTLIDIDLSNNIFLA) constitute a propeptide that is removed on maturation. A helical membrane pass occupies residues 30–50 (IFDPLVDVMPVIPVFFLLLAF).

The protein belongs to the PsbK family. In terms of assembly, PSII is composed of 1 copy each of membrane proteins PsbA, PsbB, PsbC, PsbD, PsbE, PsbF, PsbH, PsbI, PsbJ, PsbK, PsbL, PsbM, PsbT, PsbX, PsbY, PsbZ, Psb30/Ycf12, at least 3 peripheral proteins of the oxygen-evolving complex and a large number of cofactors. It forms dimeric complexes.

The protein resides in the plastid. The protein localises to the chloroplast thylakoid membrane. In terms of biological role, one of the components of the core complex of photosystem II (PSII). PSII is a light-driven water:plastoquinone oxidoreductase that uses light energy to abstract electrons from H(2)O, generating O(2) and a proton gradient subsequently used for ATP formation. It consists of a core antenna complex that captures photons, and an electron transfer chain that converts photonic excitation into a charge separation. The sequence is that of Photosystem II reaction center protein K from Chara vulgaris (Common stonewort).